Consider the following 429-residue polypeptide: Bifunctional protein GlmU (429 aa).

Positions 1–223 are pyrophosphorylase; sequence MKTSILILAA…EDEFMGINDK (223 aa). Residues 8–11, Lys-22, and 81–82 each bind UDP-N-acetyl-alpha-D-glucosamine; these read LAAG and GT. Position 102 (Asp-102) interacts with Mg(2+). Positions 135, 149, 164, and 221 each coordinate UDP-N-acetyl-alpha-D-glucosamine. Asn-221 contributes to the Mg(2+) binding site. A linker region spans residues 224 to 244; that stretch reads FELSIAENFMQKKIKKYWMQQ. Residues 245–429 form an N-acetyltransferase region; sequence GVIFHLPQST…KDYYYKKFQK (185 aa). UDP-N-acetyl-alpha-D-glucosamine-binding residues include Arg-308 and Lys-325. His-336 functions as the Proton acceptor in the catalytic mechanism. Residues Tyr-339 and Asn-350 each contribute to the UDP-N-acetyl-alpha-D-glucosamine site. Acetyl-CoA contacts are provided by residues 359 to 360, Ser-378, Ala-396, and Arg-413; that span reads NY.

It in the N-terminal section; belongs to the N-acetylglucosamine-1-phosphate uridyltransferase family. The protein in the C-terminal section; belongs to the transferase hexapeptide repeat family. In terms of assembly, homotrimer. Requires Mg(2+) as cofactor.

It localises to the cytoplasm. The enzyme catalyses alpha-D-glucosamine 1-phosphate + acetyl-CoA = N-acetyl-alpha-D-glucosamine 1-phosphate + CoA + H(+). It carries out the reaction N-acetyl-alpha-D-glucosamine 1-phosphate + UTP + H(+) = UDP-N-acetyl-alpha-D-glucosamine + diphosphate. Its pathway is nucleotide-sugar biosynthesis; UDP-N-acetyl-alpha-D-glucosamine biosynthesis; N-acetyl-alpha-D-glucosamine 1-phosphate from alpha-D-glucosamine 6-phosphate (route II): step 2/2. It participates in nucleotide-sugar biosynthesis; UDP-N-acetyl-alpha-D-glucosamine biosynthesis; UDP-N-acetyl-alpha-D-glucosamine from N-acetyl-alpha-D-glucosamine 1-phosphate: step 1/1. It functions in the pathway bacterial outer membrane biogenesis; LPS lipid A biosynthesis. In terms of biological role, catalyzes the last two sequential reactions in the de novo biosynthetic pathway for UDP-N-acetylglucosamine (UDP-GlcNAc). The C-terminal domain catalyzes the transfer of acetyl group from acetyl coenzyme A to glucosamine-1-phosphate (GlcN-1-P) to produce N-acetylglucosamine-1-phosphate (GlcNAc-1-P), which is converted into UDP-GlcNAc by the transfer of uridine 5-monophosphate (from uridine 5-triphosphate), a reaction catalyzed by the N-terminal domain. The chain is Bifunctional protein GlmU from Campylobacter jejuni subsp. jejuni serotype O:2 (strain ATCC 700819 / NCTC 11168).